Reading from the N-terminus, the 522-residue chain is MLLIRRTINAFLGCIHCNLTATCILIAFVITMYVVLVSEPASVDGTMGNFLPFSKMDLATKRDRPFYSNCVNTQDYLLNPSYIKQNASFVMLTRNGELEDVIKTINSIEEHFNQWFHYPYVFLNDQPFEEDFKAKVRDVTVGALVEFGTIDEISWNFPSDVKDTFEFYNAIEDQGDRSILYGNLESYHKMCRFYSGLFYKHPLVQKYEWYWRLEPDVEFFCDITYDPFLEMLRTNKKYGFTIIIPELYWTVPNLFRHTKSFISQKGVTLGSLWKLFTKDYDIFESDDPELRDWINYDFQAKAKISEKIAIEQLLKKGDDFQQINDDKEGIMNLIHKARSRKHIVEDKFFNEEYNLCHFWSNFEIARLSVFDNDIYNSFFQYLEKSGGFWKERWGDAPVHSIGLSLTLDLDDVHYFRDIGYRHSTIQHCPHNAMGNEEFSYLASDSKFKRKNAAYDEGREFGCGCRCRCPKKKREIEDSMGFCVNIWVNLLNQQRGHERHVEALNGNEMEEHIREDYLRQFGN.

Residues 1–16 lie on the Cytoplasmic side of the membrane; sequence MLLIRRTINAFLGCIH. A helical; Signal-anchor for type II membrane protein membrane pass occupies residues 17-37; that stretch reads CNLTATCILIAFVITMYVVLV. A stem region region spans residues 38–82; the sequence is SEPASVDGTMGNFLPFSKMDLATKRDRPFYSNCVNTQDYLLNPSY. Residues 38-522 are Lumenal-facing; it reads SEPASVDGTM…REDYLRQFGN (485 aa). The catalytic stretch occupies residues 83–522; it reads IKQNASFVML…REDYLRQFGN (440 aa). N-linked (GlcNAc...) asparagine glycosylation is present at Asn-86. The Nucleophile role is filled by Glu-363.

Belongs to the glycosyltransferase 15 family.

Its subcellular location is the membrane. In terms of biological role, possible glycosyltransferase that transfers an alpha-D-mannosyl residue from GDP-mannose into lipid-linked oligosaccharide, forming an alpha-(1-&gt;2)-D-mannosyl-D-mannose linkage. The polypeptide is Probable mannosyltransferase KTR5 (KTR5) (Saccharomyces cerevisiae (strain ATCC 204508 / S288c) (Baker's yeast)).